Consider the following 355-residue polypeptide: MSSTQFDGDIDSFVSYLKSNRGLSANTLKAYRADLTACLHLFELRGVTDLNEITLDDLRSWMAVESRDHARSSMARKTVAVRGFFAWAYEHGLTATDPAATLMTPSIPSTLPAVLTESQAEQLLDVAEHAVATNQYKDDGGAAAASGSGKAAGKTADKSADTVNRSEAPARADKRDNARVTAESQRNAAILELLYATGIRVAELVSMDIADIDFSNRTIKVTGKGNKQRVVPFGLPAQRALETWLEQGRPVLARTATDAVKSRAANALFLGARGGRIDQRIARDIVHRAAREAGVPDISPHALRHSAATHILDGGADLREVQEMLGHSSLKTTQRYTHVSIEQLKNRYGQAFPRA.

Positions 4–89 (TQFDGDIDSF…AVRGFFAWAY (86 aa)) constitute a Core-binding (CB) domain. The tract at residues 138-180 (DDGGAAAASGSGKAAGKTADKSADTVNRSEAPARADKRDNARV) is disordered. A compositionally biased stretch (low complexity) spans 141-154 (GAAAASGSGKAAGK). The region spanning 158–349 (KSADTVNRSE…SIEQLKNRYG (192 aa)) is the Tyr recombinase domain. Positions 168–178 (APARADKRDNA) are enriched in basic and acidic residues. Active-site residues include Arg200, Lys224, His301, Arg304, and His327. Tyr336 serves as the catalytic O-(3'-phospho-DNA)-tyrosine intermediate.

The protein belongs to the 'phage' integrase family. XerC subfamily. In terms of assembly, forms a cyclic heterotetrameric complex composed of two molecules of XerC and two molecules of XerD.

It is found in the cytoplasm. Site-specific tyrosine recombinase, which acts by catalyzing the cutting and rejoining of the recombining DNA molecules. The XerC-XerD complex is essential to convert dimers of the bacterial chromosome into monomers to permit their segregation at cell division. It also contributes to the segregational stability of plasmids. The sequence is that of Tyrosine recombinase XerC from Bifidobacterium longum subsp. infantis (strain ATCC 15697 / DSM 20088 / JCM 1222 / NCTC 11817 / S12).